We begin with the raw amino-acid sequence, 391 residues long: Ferrochelatase (391 aa).

H196 and E281 together coordinate Fe cation.

The protein belongs to the ferrochelatase family.

It is found in the cytoplasm. The enzyme catalyses heme b + 2 H(+) = protoporphyrin IX + Fe(2+). It participates in porphyrin-containing compound metabolism; protoheme biosynthesis; protoheme from protoporphyrin-IX: step 1/1. Its function is as follows. Catalyzes the ferrous insertion into protoporphyrin IX. In Prochlorococcus marinus (strain AS9601), this protein is Ferrochelatase.